A 483-amino-acid chain; its full sequence is Leukocyte immunoglobulin-like receptor subfamily A member 2 (483 aa).

A signal peptide spans 1-23 (MTPILTVLICLGLSLGPRTHVQA). The Extracellular segment spans residues 24–449 (GHLPKPTLWA…QHPQDYTVEN (426 aa)). Ig-like C2-type domains lie at 27 to 113 (PKPT…DPLE), 117 to 222 (TGAY…GVSK), 224 to 313 (PSLS…DPLD), and 324 to 413 (PSLS…SDPL). Cysteines 49 and 97 form a disulfide. Asparagine 64, asparagine 103, and asparagine 138 each carry an N-linked (GlcNAc...) asparagine glycan. Cystine bridges form between cysteine 143–cysteine 195 and cysteine 244–cysteine 295. N-linked (GlcNAc...) asparagine glycosylation is found at asparagine 279, asparagine 300, and asparagine 339. A disulfide bond links cysteine 344 and cysteine 395. Tyrosine 404 carries the 3'-nitrotyrosine modification. Asparagine 429 carries N-linked (GlcNAc...) asparagine glycosylation. The helical transmembrane segment at 450–470 (LIRMGVAGLVLVVLGILLFEA) threads the bilayer. Residues 471-483 (QHSQRSLQDAAGR) are Cytoplasmic-facing.

In terms of assembly, homodimer. As to expression, detected on the surface of all peripheral blood monocytes, neutrophils, basophils and eosinophils (at protein level). Expression levels are very low or not detectable on monocytes, T-cells, B-cells, dendritic cells and natural killer (NK) cells.

The protein resides in the cell membrane. It localises to the secreted. Functionally, part of the innate immune responses against microbial infection. Specifically recognizes a set of N-terminally truncated immunoglobulins that are produced via cleavage by proteases from a range of pathogenic bacteria and fungi, including L.pneumophila, M.hyorhinis, S.pneumoniae, S.aureus and C.albicans. Recognizes epitopes that are in part in the variable region of the immunoglobulin light chains, but requires also the constant region for signaling. Binds to a subset of cleaved IgM, IgG3 and IgG4 molecules, but does not bind cleaved IgA1. Binding of N-terminally truncated immunoglobulins mediates activation of neutrophils. In monocytes, activation leads to the release of CSF2, CF3, IL6, CXCL8 and CCL3 and down-regulates responses to bacterial lipopolysaccharide (LPS), possibly via down-regulation of TLR4 expression and reduced signaling via TLR4. In eosinophils, activation by ligand binding leads to the release of RNASE2, IL4 and leukotriene C4. Does not bind class I MHC antigens. In Homo sapiens (Human), this protein is Leukocyte immunoglobulin-like receptor subfamily A member 2 (LILRA2).